A 785-amino-acid polypeptide reads, in one-letter code: MKLGKVEFCHLLQIIALFLCLSGMNQAEPSRSRSKPYFQSGRTRTKRSWVWNQFFVLEEYMGSDPLYVGKLHSDVDKGDGSIKYILSGEGASSIFIIDENTGDIHATKRLDREEQAYYTLRAQAHDRLTNKPVEPESEFVIKIQDINDNEPKFLDGPYTAGVPEMSPVGTSVVQVTATDADDPTYGNSARVVYSILQGQPYFSVEPKTGIIKTALPNMDREAKDQYLLVIQAKDMVGQNGGLSGTTSVTVTLTDVNDNPPRFPRRSYQYNVPESLPLASVVARIKAADADVGPNAEMEYKIVDGDGLGVFKISVDKDTQEGIITIQKELDFEAKTSYTLRIEAANMHVDPRFLSLGPFSDMTTVKIIVEDVDEPPVFTSRLYSMVVSEAAKVGTIIGTVAAHDPDASNSPVRYSIDRNTDLERYFNIDANSGVITTAKSLDRETNAVHNITVLAMESQNPAQIGRGYVAITILDINDNAPEFAMEYETTVCENAQPGQIIQKISAIDKDDPPNGHQFYFSLTAEAANNHNFTLQDNKDNTATVLTRRNGFRRQEQSVFYLPIFIVDSGSPSLSSTNTLTIRVCDCDADGIAQTCNAEAYILPAGLSTGALIAILACVLTLLVLVLLIVTMRRRKKEPLIFDEERDIRENIVRYDDEGGGEEDTEAFDMAALRNLNIIRDTKTRRDVTPEIQFLSRPTFKSIPDNVIFREFIWERLKEADVDPCAPPYDSLQTYAFEGNGSVAESLSSLDSISSNSDQNYDYLSDWGPRFKRLADMYGSGPDCLYS.

The N-terminal stretch at 1–27 (MKLGKVEFCHLLQIIALFLCLSGMNQA) is a signal peptide. Positions 28 to 47 (EPSRSRSKPYFQSGRTRTKR) are excised as a propeptide. The Extracellular portion of the chain corresponds to 48–607 (SWVWNQFFVL…AYILPAGLST (560 aa)). Cadherin domains follow at residues 49–153 (WVWN…EPKF), 154–262 (LDGP…PPRF), 263–377 (PRRS…PPVF), 378–482 (TSRL…APEF), and 482–599 (FAME…AEAY). N449 and N530 each carry an N-linked (GlcNAc...) asparagine glycan. Residues 608 to 628 (GALIAILACVLTLLVLVLLIV) traverse the membrane as a helical segment. Topologically, residues 629 to 785 (TMRRRKKEPL…YGSGPDCLYS (157 aa)) are cytoplasmic.

It localises to the cell membrane. Functionally, cadherins are calcium-dependent cell adhesion proteins. They preferentially interact with themselves in a homophilic manner in connecting cells; cadherins may thus contribute to the sorting of heterogeneous cell types. This Gallus gallus (Chicken) protein is Cadherin-7 (CDH7).